The following is a 1015-amino-acid chain: DNA polymerase catalytic subunit (1015 aa).

The protein belongs to the DNA polymerase type-B family. Forms a complex with the major DNA-binding protein BALF2, the DNA polymerase processivity factor BMRF1, and the alkaline exonuclease BGLF5. Interacts with the putative helicase-primase complex composed of BBLF4, BSLF1 and BBLF2/3 proteins; these interactions may coordinate leading and lagging strand DNA synthesis at the replication fork.

Its subcellular location is the host nucleus. It catalyses the reaction DNA(n) + a 2'-deoxyribonucleoside 5'-triphosphate = DNA(n+1) + diphosphate. In terms of biological role, replicates viral genomic DNA in the late phase of lytic infection, producing long concatemeric DNA. The replication complex is composed of six viral proteins: the DNA polymerase, processivity factor, primase, primase-associated factor, helicase, and ssDNA-binding protein. The sequence is that of DNA polymerase catalytic subunit from Homo sapiens (Human).